Consider the following 303-residue polypeptide: Coenzyme PQQ synthesis protein B (303 aa).

Belongs to the PqqB family.

The protein operates within cofactor biosynthesis; pyrroloquinoline quinone biosynthesis. Functionally, may be involved in the transport of PQQ or its precursor to the periplasm. The chain is Coenzyme PQQ synthesis protein B from Pseudomonas putida (strain ATCC 700007 / DSM 6899 / JCM 31910 / BCRC 17059 / LMG 24140 / F1).